A 128-amino-acid polypeptide reads, in one-letter code: MTSRAIIPPGSGVPLAPYSPGMQADNVIYVSGTLPFDKDNNVVHLGDAACQTRHVLEIIKGVLEAAGSGMADVTFNHIFLTDWANYGAINAVYAEYFPGEKPARYCVQVGLVKPGALVEIATIAHKRA.

The protein belongs to the RutC family.

The catalysed reaction is (Z)-3-aminoacrylate + H2O + H(+) = 3-oxopropanoate + NH4(+). Its function is as follows. Involved in pyrimidine catabolism. Catalyzes the deamination of 3-aminoacrylate to malonic semialdehyde, a reaction that can also occur spontaneously. RutC may facilitate the reaction and modulate the metabolic fitness, rather than catalyzing essential functions. The protein is 3-aminoacrylate deaminase RutC of Azorhizobium caulinodans (strain ATCC 43989 / DSM 5975 / JCM 20966 / LMG 6465 / NBRC 14845 / NCIMB 13405 / ORS 571).